We begin with the raw amino-acid sequence, 712 residues long: Polyphosphate kinase (712 aa).

Residue Asn49 coordinates ATP. Arg398 and Arg428 together coordinate Mg(2+). His458 (phosphohistidine intermediate) is an active-site residue. Residues Tyr491, Arg587, and His615 each contribute to the ATP site.

It belongs to the polyphosphate kinase 1 (PPK1) family. It depends on Mg(2+) as a cofactor. Post-translationally, an intermediate of this reaction is the autophosphorylated ppk in which a phosphate is covalently linked to a histidine residue through a N-P bond.

The catalysed reaction is [phosphate](n) + ATP = [phosphate](n+1) + ADP. Catalyzes the reversible transfer of the terminal phosphate of ATP to form a long-chain polyphosphate (polyP). In Parasynechococcus marenigrum (strain WH8102), this protein is Polyphosphate kinase.